The following is a 156-amino-acid chain: Small ribosomal subunit protein uS7 (156 aa).

This sequence belongs to the universal ribosomal protein uS7 family. As to quaternary structure, part of the 30S ribosomal subunit. Contacts proteins S9 and S11.

In terms of biological role, one of the primary rRNA binding proteins, it binds directly to 16S rRNA where it nucleates assembly of the head domain of the 30S subunit. Is located at the subunit interface close to the decoding center, probably blocks exit of the E-site tRNA. The sequence is that of Small ribosomal subunit protein uS7 from Mycobacterium bovis (strain ATCC BAA-935 / AF2122/97).